We begin with the raw amino-acid sequence, 659 residues long: Exoribonuclease 2 (659 aa).

The RNB domain maps to 189 to 531; that stretch reads RENLTALHFV…NHRLIKAVLA (343 aa). Residues 576–658 form the S1 motif domain; sequence NVEFNAEVQD…ATRSIVGEIL (83 aa).

This sequence belongs to the RNR ribonuclease family. RNase II subfamily.

The protein localises to the cytoplasm. The enzyme catalyses Exonucleolytic cleavage in the 3'- to 5'-direction to yield nucleoside 5'-phosphates.. Involved in mRNA degradation. Hydrolyzes single-stranded polyribonucleotides processively in the 3' to 5' direction. This Haemophilus influenzae (strain 86-028NP) protein is Exoribonuclease 2.